The chain runs to 603 residues: DNA mismatch repair protein MutL (603 aa).

The protein belongs to the DNA mismatch repair MutL/HexB family.

Functionally, this protein is involved in the repair of mismatches in DNA. It is required for dam-dependent methyl-directed DNA mismatch repair. May act as a 'molecular matchmaker', a protein that promotes the formation of a stable complex between two or more DNA-binding proteins in an ATP-dependent manner without itself being part of a final effector complex. The protein is DNA mismatch repair protein MutL of Nitrobacter hamburgensis (strain DSM 10229 / NCIMB 13809 / X14).